The primary structure comprises 85 residues: U4-theraphotoxin-Hhn1w (85 aa).

An N-terminal signal peptide occupies residues 1-22 (MKVTLIAILTCAAVLALHTTAA). The propeptide occupies 23 to 48 (EELEAESQLMEVGMPDTELAAVDEER). Intrachain disulfides connect Cys-52–Cys-66, Cys-56–Cys-77, and Cys-71–Cys-82.

Belongs to the neurotoxin 12 (Hwtx-2) family. 02 (Hwtx-2) subfamily. In terms of tissue distribution, expressed by the venom gland.

It is found in the secreted. Its function is as follows. Postsynaptic neurotoxin. The protein is U4-theraphotoxin-Hhn1w of Cyriopagopus hainanus (Chinese bird spider).